The chain runs to 170 residues: Ribosome maturation factor RimM (170 aa).

Residues 97 to 170 (HPDEYYWVDL…RIVVDWDPEF (74 aa)) enclose the PRC barrel domain.

The protein belongs to the RimM family. In terms of assembly, binds ribosomal protein uS19.

It is found in the cytoplasm. An accessory protein needed during the final step in the assembly of 30S ribosomal subunit, possibly for assembly of the head region. Essential for efficient processing of 16S rRNA. May be needed both before and after RbfA during the maturation of 16S rRNA. It has affinity for free ribosomal 30S subunits but not for 70S ribosomes. The polypeptide is Ribosome maturation factor RimM (Xylella fastidiosa (strain M12)).